Here is a 179-residue protein sequence, read N- to C-terminus: Tetratricopeptide repeat protein 36 (179 aa).

3 TPR repeats span residues 43–76 (SLQL…CPKN), 78–110 (SAYN…AGPK), and 115–148 (CQAY…GSSF).

It belongs to the TTC36 family.

The polypeptide is Tetratricopeptide repeat protein 36 (Caenorhabditis elegans).